The sequence spans 362 residues: Biotin synthase (362 aa).

A Radical SAM core domain is found at 39-267 (NVVQVSTLLS…ETQVRLSAGR (229 aa)). [4Fe-4S] cluster is bound by residues cysteine 54, cysteine 58, and cysteine 61. Positions 98, 130, 190, and 262 each coordinate [2Fe-2S] cluster. The disordered stretch occupies residues 317–362 (PFTKVSQPTTVEAKDSRYESLGEKPKWSRPSHTIEKNLELSGKGKN). A compositionally biased stretch (basic and acidic residues) spans 328 to 354 (EAKDSRYESLGEKPKWSRPSHTIEKNL).

It belongs to the radical SAM superfamily. Biotin synthase family. In terms of assembly, homodimer. [4Fe-4S] cluster serves as cofactor. It depends on [2Fe-2S] cluster as a cofactor.

The enzyme catalyses (4R,5S)-dethiobiotin + (sulfur carrier)-SH + 2 reduced [2Fe-2S]-[ferredoxin] + 2 S-adenosyl-L-methionine = (sulfur carrier)-H + biotin + 2 5'-deoxyadenosine + 2 L-methionine + 2 oxidized [2Fe-2S]-[ferredoxin]. The protein operates within cofactor biosynthesis; biotin biosynthesis; biotin from 7,8-diaminononanoate: step 2/2. In terms of biological role, catalyzes the conversion of dethiobiotin (DTB) to biotin by the insertion of a sulfur atom into dethiobiotin via a radical-based mechanism. In Flavobacterium psychrophilum (strain ATCC 49511 / DSM 21280 / CIP 103535 / JIP02/86), this protein is Biotin synthase.